A 246-amino-acid polypeptide reads, in one-letter code: Pyridoxine 5'-phosphate synthase (246 aa).

Asn-7 contacts 3-amino-2-oxopropyl phosphate. 9–10 (DH) serves as a coordination point for 1-deoxy-D-xylulose 5-phosphate. A 3-amino-2-oxopropyl phosphate-binding site is contributed by Arg-18. The active-site Proton acceptor is the His-43. Residues Arg-45 and His-50 each contribute to the 1-deoxy-D-xylulose 5-phosphate site. Residue Glu-70 is the Proton acceptor of the active site. A 1-deoxy-D-xylulose 5-phosphate-binding site is contributed by Thr-100. Residue His-190 is the Proton donor of the active site. 3-amino-2-oxopropyl phosphate-binding positions include Gly-191 and 212-213 (GH).

This sequence belongs to the PNP synthase family. As to quaternary structure, homooctamer; tetramer of dimers.

It is found in the cytoplasm. The enzyme catalyses 3-amino-2-oxopropyl phosphate + 1-deoxy-D-xylulose 5-phosphate = pyridoxine 5'-phosphate + phosphate + 2 H2O + H(+). The protein operates within cofactor biosynthesis; pyridoxine 5'-phosphate biosynthesis; pyridoxine 5'-phosphate from D-erythrose 4-phosphate: step 5/5. In terms of biological role, catalyzes the complicated ring closure reaction between the two acyclic compounds 1-deoxy-D-xylulose-5-phosphate (DXP) and 3-amino-2-oxopropyl phosphate (1-amino-acetone-3-phosphate or AAP) to form pyridoxine 5'-phosphate (PNP) and inorganic phosphate. This Prochlorococcus marinus (strain SARG / CCMP1375 / SS120) protein is Pyridoxine 5'-phosphate synthase.